The sequence spans 391 residues: MNIHEYQGKDILRKFGVAVPKGIVAHSPEEAKQAAEQLFEEQSSPVVVVKAQIHAGGRGKAGGVKLAKSPEEAYEIASQMIGTTLVTHQTGPEGKEVRRLLVEEGMNIDREFYVGITLDRATSQNVLMISTEGGMEIEKVAEETPDRLLKIQVDPLFGLQGFQAREAAFFLGLEGEQFRSAVSFIMSLYKAYTSIDAALAEINPLVVTKEGRVLALDAKINFDSNALYRHKDFLELRDITEEDPFEVEASKSNLNYVRLDGNVGCMVNGAGLAMGTMDIIQLAGGKPANFLDVGGGASPQTVEEGFKIILSDKNVKAILVNIFGGIVRCDRVAGGIIEAAKKIGLNLPVIVRLEGTNADIAQKMLDESGLNLIAADGLKDAAQKVTEALSA.

Residues 9–248 (KDILRKFGVA…ITEEDPFEVE (240 aa)) enclose the ATP-grasp domain. ATP is bound by residues Lys50, 57-59 (GRG), Glu103, Met106, and Glu111. Mg(2+) contacts are provided by Asn203 and Asp217. Substrate-binding positions include Asn268 and 325–327 (GIV).

Belongs to the succinate/malate CoA ligase beta subunit family. As to quaternary structure, heterotetramer of two alpha and two beta subunits. Mg(2+) is required as a cofactor.

The catalysed reaction is succinate + ATP + CoA = succinyl-CoA + ADP + phosphate. The enzyme catalyses GTP + succinate + CoA = succinyl-CoA + GDP + phosphate. It functions in the pathway carbohydrate metabolism; tricarboxylic acid cycle; succinate from succinyl-CoA (ligase route): step 1/1. Succinyl-CoA synthetase functions in the citric acid cycle (TCA), coupling the hydrolysis of succinyl-CoA to the synthesis of either ATP or GTP and thus represents the only step of substrate-level phosphorylation in the TCA. The beta subunit provides nucleotide specificity of the enzyme and binds the substrate succinate, while the binding sites for coenzyme A and phosphate are found in the alpha subunit. The polypeptide is Succinate--CoA ligase [ADP-forming] subunit beta (Chlorobium phaeovibrioides (strain DSM 265 / 1930) (Prosthecochloris vibrioformis (strain DSM 265))).